A 461-amino-acid polypeptide reads, in one-letter code: UDP-N-acetylmuramate--L-alanine ligase (461 aa).

An ATP-binding site is contributed by glycine 112 to threonine 118.

The protein belongs to the MurCDEF family.

The protein resides in the cytoplasm. The enzyme catalyses UDP-N-acetyl-alpha-D-muramate + L-alanine + ATP = UDP-N-acetyl-alpha-D-muramoyl-L-alanine + ADP + phosphate + H(+). It functions in the pathway cell wall biogenesis; peptidoglycan biosynthesis. Functionally, cell wall formation. In Hydrogenovibrio crunogenus (strain DSM 25203 / XCL-2) (Thiomicrospira crunogena), this protein is UDP-N-acetylmuramate--L-alanine ligase.